A 356-amino-acid polypeptide reads, in one-letter code: 4-hydroxy-2-oxovalerate aldolase (356 aa).

Residues 7–257 (PRVTDTTLRD…NPGLDVFKLM (251 aa)) enclose the Pyruvate carboxyltransferase domain. Substrate is bound at residue 15 to 16 (RD). Aspartate 16 is a Mn(2+) binding site. The Proton acceptor role is filled by histidine 19. Serine 169 and histidine 196 together coordinate substrate. Mn(2+) contacts are provided by histidine 196 and histidine 198. A substrate-binding site is contributed by tyrosine 287.

It belongs to the 4-hydroxy-2-oxovalerate aldolase family.

It catalyses the reaction (S)-4-hydroxy-2-oxopentanoate = acetaldehyde + pyruvate. This chain is 4-hydroxy-2-oxovalerate aldolase, found in Thermomicrobium roseum (strain ATCC 27502 / DSM 5159 / P-2).